A 76-amino-acid polypeptide reads, in one-letter code: Conotoxin Cal5a L2 (76 aa).

The N-terminal stretch at 1–22 (MRFYIGLMAALMLTSILRTDSA) is a signal peptide. Residues 23–42 (SVGQTGTKSELALIERVIRQ) constitute a propeptide that is removed on maturation. P50 is subject to 4-hydroxyproline. 4-hydroxyproline; partial occurs at positions 58, 62, and 64.

Belongs to the conotoxin T superfamily. Post-translationally, contains 2 disulfide bonds that can be either 'C1-C3, C2-C4' or 'C1-C4, C2-C3', since these disulfide connectivities have been observed for conotoxins with cysteine framework V (for examples, see AC P0DQQ7 and AC P81755). As to expression, expressed by the venom duct.

The protein localises to the secreted. In terms of biological role, probable neurotoxin with unknown target. Possibly targets ion channels. The sequence is that of Conotoxin Cal5a L2 from Californiconus californicus (California cone).